The primary structure comprises 308 residues: tRNA dimethylallyltransferase (308 aa).

14–21 provides a ligand contact to ATP; the sequence is GPTASGKT. 16–21 contributes to the substrate binding site; the sequence is TASGKT. Interaction with substrate tRNA stretches follow at residues 39–42, 163–167, and 244–249; these read DSAL, QRLSR, and RCVGYR.

Belongs to the IPP transferase family. In terms of assembly, monomer. The cofactor is Mg(2+).

It catalyses the reaction adenosine(37) in tRNA + dimethylallyl diphosphate = N(6)-dimethylallyladenosine(37) in tRNA + diphosphate. Its function is as follows. Catalyzes the transfer of a dimethylallyl group onto the adenine at position 37 in tRNAs that read codons beginning with uridine, leading to the formation of N6-(dimethylallyl)adenosine (i(6)A). This chain is tRNA dimethylallyltransferase, found in Shewanella baltica (strain OS185).